A 280-amino-acid chain; its full sequence is Killer cell lectin-like receptor 7 (280 aa).

At 1 to 44 the chain is on the cytoplasmic side; the sequence is MSEQEVTYSTVRFHESSRLQKLVRTEEPQRPREACYREYSVPWK. The chain crosses the membrane as a helical; Signal-anchor for type II membrane protein span at residues 45-66; the sequence is LIVIACGILCFLLLVTVALLAI. Topologically, residues 67–280 are extracellular; sequence TIFQHSQQKH…CGKRLDKFPH (214 aa). The N-linked (GlcNAc...) asparagine glycan is linked to Asn-104. The C-type lectin domain occupies 156–275; the sequence is GFEKYWFCYG…SYICICGKRL (120 aa). 4 disulfide bridges follow: Cys-163–Cys-168, Cys-181–Cys-269, Cys-185–Cys-271, and Cys-250–Cys-263. Asn-239 carries N-linked (GlcNAc...) asparagine glycosylation.

As to quaternary structure, homodimer; disulfide-linked.

The protein localises to the membrane. Functionally, receptor on natural killer (NK) cells for class I MHC. The sequence is that of Killer cell lectin-like receptor 7 (Klra7) from Mus musculus (Mouse).